We begin with the raw amino-acid sequence, 208 residues long: Small ribosomal subunit protein eS8 (208 aa).

It belongs to the eukaryotic ribosomal protein eS8 family. In terms of assembly, component of the small ribosomal subunit. Identified in a IGF2BP1-dependent mRNP granule complex containing untranslated mRNAs. Part of the small subunit (SSU) processome, composed of more than 70 proteins and the RNA chaperone small nucleolar RNA (snoRNA) U3.

The protein resides in the cytoplasm. The protein localises to the membrane. It localises to the nucleus. It is found in the nucleolus. In terms of biological role, component of the small ribosomal subunit. The ribosome is a large ribonucleoprotein complex responsible for the synthesis of proteins in the cell. Part of the small subunit (SSU) processome, first precursor of the small eukaryotic ribosomal subunit. During the assembly of the SSU processome in the nucleolus, many ribosome biogenesis factors, an RNA chaperone and ribosomal proteins associate with the nascent pre-rRNA and work in concert to generate RNA folding, modifications, rearrangements and cleavage as well as targeted degradation of pre-ribosomal RNA by the RNA exosome. In Caenorhabditis elegans, this protein is Small ribosomal subunit protein eS8 (rps-8).